The primary structure comprises 130 residues: Small ribosomal subunit protein uS9 (130 aa).

Belongs to the universal ribosomal protein uS9 family.

In Delftia acidovorans (strain DSM 14801 / SPH-1), this protein is Small ribosomal subunit protein uS9.